Reading from the N-terminus, the 312-residue chain is Pre-mRNA-splicing factor 38A (312 aa).

An N-terminal protein interaction domain region spans residues 1 to 179; it reads MANRTVKDAH…VLEEAEQLEP (179 aa). Phosphoserine occurs at positions 11, 193, 194, 209, and 226. Residues 170–204 adopt a coiled-coil conformation; that stretch reads VLEEAEQLEPRVSALEEDMDDVESSEEEEEEDEKL. The tract at residues 181–312 is disordered; that stretch reads VSALEEDMDD…SHKKSRRGNE (132 aa). Acidic residues predominate over residues 184-202; sequence LEEDMDDVESSEEEEEEDE. Over residues 203–224 the composition is skewed to basic and acidic residues; sequence KLERVPSPDHRRRSYRDLDKPR. 2 stretches are compositionally biased toward basic residues: residues 225 to 294 and 301 to 312; these read RSPT…RSHS and KKSHKKSRRGNE.

This sequence belongs to the PRP38 family. In terms of assembly, component of the spliceosome B complex. Interacts (via N-terminal interaction domain) with ZMAT2 and MFAP1.

Its subcellular location is the nucleus. Its function is as follows. Involved in pre-mRNA splicing as a component of the spliceosome. This Bos taurus (Bovine) protein is Pre-mRNA-splicing factor 38A (PRPF38A).